Consider the following 194-residue polypeptide: uncharacterized protein (194 aa).

Disordered regions lie at residues 52-71 (KGRTTQSAINSENSDKEKYK) and 86-194 (AEAL…DGGS). 3 stretches are compositionally biased toward polar residues: residues 53-63 (GRTTQSAINSE), 98-111 (ALTSSKAANRSSTN), and 119-132 (IAHSTSRSRSTSPA). Positions 133-169 (NRHRRKEKERTRSNHRHGSHRRHEPYRTHLSRHHRHS) are enriched in basic residues. Positions 175–194 (SKRDDRYERRREHSPNDGGS) are enriched in basic and acidic residues.

This is an uncharacterized protein from Schizosaccharomyces pombe (strain 972 / ATCC 24843) (Fission yeast).